Consider the following 155-residue polypeptide: 6,7-dimethyl-8-ribityllumazine synthase (155 aa).

5-amino-6-(D-ribitylamino)uracil is bound by residues Phe-24, 58–60, and 82–84; these read AFE and VII. (2S)-2-hydroxy-3-oxobutyl phosphate is bound at residue 87 to 88; sequence ST. Catalysis depends on His-90, which acts as the Proton donor. Phe-115 is a 5-amino-6-(D-ribitylamino)uracil binding site. Residue Arg-129 participates in (2S)-2-hydroxy-3-oxobutyl phosphate binding.

The protein belongs to the DMRL synthase family.

The catalysed reaction is (2S)-2-hydroxy-3-oxobutyl phosphate + 5-amino-6-(D-ribitylamino)uracil = 6,7-dimethyl-8-(1-D-ribityl)lumazine + phosphate + 2 H2O + H(+). Its pathway is cofactor biosynthesis; riboflavin biosynthesis; riboflavin from 2-hydroxy-3-oxobutyl phosphate and 5-amino-6-(D-ribitylamino)uracil: step 1/2. In terms of biological role, catalyzes the formation of 6,7-dimethyl-8-ribityllumazine by condensation of 5-amino-6-(D-ribitylamino)uracil with 3,4-dihydroxy-2-butanone 4-phosphate. This is the penultimate step in the biosynthesis of riboflavin. The protein is 6,7-dimethyl-8-ribityllumazine synthase of Pelodictyon phaeoclathratiforme (strain DSM 5477 / BU-1).